Reading from the N-terminus, the 202-residue chain is Histone chaperone ASF1B (202 aa).

Residues 1–156 (MAKVSVLNVA…TRFHINWDNN (156 aa)) are interaction with histone H3 and CHAF1B. Ser-198 is modified (phosphoserine; by TLK2).

The protein belongs to the ASF1 family. As to quaternary structure, interacts with histone H3 (via C-terminus), including histone H3.1, H3.2 and H3.3, and histone H4; the interaction with H3 is direct. Interacts with the CHAF1A, CHAF1B and RBBP4 subunits of the CAF-1 complex. Interacts with HAT1, NASP and TAF1. Found in a soluble complex with NASP and histones H3 and H4; the interaction with NASP is probably indirect and mediated by H3-H4. Interacts with CDAN1. Found in a cytosolic complex with CDAN1, ASF1A, IPO4 and histones H3.1 and H4. Interacts with CREBBP. In terms of processing, phosphorylated by TLK1 and TLK2.

It localises to the nucleus. It is found in the cytoplasm. The protein resides in the cytosol. In terms of biological role, histone chaperone that facilitates histone deposition and histone exchange and removal during nucleosome assembly and disassembly. Cooperates with chromatin assembly factor 1 (CAF-1) to promote replication-dependent chromatin assembly. Also involved in the nuclear import of the histone H3-H4 dimer together with importin-4 (IPO4): specifically recognizes and binds newly synthesized histones with the monomethylation of H3 'Lys-9' (H3K9me1) and diacetylation at 'Lys-5' and 'Lys-12' of H4 (H4K5ac and H4K12ac) marks in the cytosol. Does not participate in replication-independent nucleosome deposition which is mediated by ASF1A and HIRA. Required for gonad development. This Bos taurus (Bovine) protein is Histone chaperone ASF1B (ASF1B).